A 662-amino-acid polypeptide reads, in one-letter code: MSDPNQNGQQGGQQNAGGNYYQQYFQKLTQQAQAGGGYQPYGGYGGYGGYGGYQPYGGYQQFYQDGQQAQQGAYNGYPYQAQGAPGGFNNYNNQFQPQQQSQGMTLDDFHKQKQTSQSAPPKQKKSLKLVSSSGIKLANATKKPKEDEKKEEEPKKEEKKAEPKEQESKKEEPKREGTPRPAAAKDEKKEDLPKLEKLKIKEEQAAANASGADSLIKEQEEEVDEGVVNDMFGGKDHMSIIFMGHVDAGKSTMGGNILYMTGSVDKRTVEKYEREAKDAGKQGWYLSWVMDTNREERDDGKTIEVGRAYFETEKRRYTILDAPGHKMYVSEMIGGASQADVGILVISARKGEYETGFEKGGQTREHALLAKTQGVNKLIVTINKMDDPTVNWSKERYDQCVKNLSNFLKAIGYNVKEEVVFMPVSGYSGAGLGTRVDPKECPWYDGPALLEYMDNMSHVDRKMNAPFMLPIAAKMRDMGTIVEGKIESGHIRKGHSTLLMPNKIPVEIQNIYNETENEVDMAICGEQVKLKIKGVEEEDIAPGFVLTSPKNPVKNVTRFVAQVAIVELKSILSSGFSCVMHVHTAIEEVRITKLLHKLERGTNRKSKKPPAFAKKGMKIIAVLETERPVCVETYQDYPQLGRFTLRDQGTTIAIGKIVKIIE.

A several sort of repeats region spans residues 9–102 (QQGGQQNAGG…NQFQPQQQSQ (94 aa)). Low complexity-rich tracts occupy residues 73 to 102 (AYNGYPYQAQGAPGGFNNYNNQFQPQQQSQ) and 128 to 137 (KLVSSSGIKL). The segment at 73 to 193 (AYNGYPYQAQ…AKDEKKEDLP (121 aa)) is disordered. Residues 103–230 (GMTLDDFHKQ…EEVDEGVVND (128 aa)) are charged. Residues 143 to 193 (KPKEDEKKEEEPKKEEKKAEPKEQESKKEEPKREGTPRPAAAKDEKKEDLP) show a composition bias toward basic and acidic residues. Residues 235–461 (KDHMSIIFMG…YMDNMSHVDR (227 aa)) form the tr-type G domain. The interval 244-251 (GHVDAGKS) is G1. 244–251 (GHVDAGKS) contacts GTP. Residues 300-304 (GKTIE) are G2. A Phosphothreonine modification is found at threonine 318. The interval 321–324 (DAPG) is G3. GTP-binding positions include 321 to 325 (DAPGH) and 383 to 386 (NKMD). A G4 region spans residues 383–386 (NKMD). Positions 425–427 (SGY) are G5.

The protein belongs to the TRAFAC class translation factor GTPase superfamily. Classic translation factor GTPase family. ERF3 subfamily.

The protein localises to the cytoplasm. Functionally, involved in translation termination. Stimulates the activity of ERF1. Binds guanine nucleotides. This Zygosaccharomyces rouxii protein is Eukaryotic peptide chain release factor GTP-binding subunit (SUP35).